The chain runs to 149 residues: Transcriptional repressor NrdR (149 aa).

Residues 3–34 fold into a zinc finger; it reads CPFCTAKDTKVIDSRLVGGGHQVRRRRECNDC. The 91-residue stretch at 49 to 139 folds into the ATP-cone domain; sequence PRVIKQDGSR…VYRSFEDIRE (91 aa).

Belongs to the NrdR family. Requires Zn(2+) as cofactor.

Negatively regulates transcription of bacterial ribonucleotide reductase nrd genes and operons by binding to NrdR-boxes. The protein is Transcriptional repressor NrdR of Pseudoalteromonas translucida (strain TAC 125).